The sequence spans 946 residues: Protein translocase subunit SecA (946 aa).

ATP contacts are provided by residues Q89, 107 to 111, and D508; that span reads GEGKT. The disordered stretch occupies residues 534-569; that stretch reads PEDSHKPPVPLQRRKDSSVGFGKEENNSKDKKVNHS. Over residues 546–569 the composition is skewed to basic and acidic residues; the sequence is RRKDSSVGFGKEENNSKDKKVNHS.

This sequence belongs to the SecA family. Monomer and homodimer. Part of the essential Sec protein translocation apparatus which comprises SecA, SecYEG and auxiliary proteins SecDF. Other proteins may also be involved.

It localises to the cell inner membrane. The protein resides in the cellular thylakoid membrane. It is found in the cytoplasm. The catalysed reaction is ATP + H2O + cellular proteinSide 1 = ADP + phosphate + cellular proteinSide 2.. Part of the Sec protein translocase complex. Interacts with the SecYEG preprotein conducting channel. Has a central role in coupling the hydrolysis of ATP to the transfer of proteins into and across the cell membrane, serving as an ATP-driven molecular motor driving the stepwise translocation of polypeptide chains across the membrane. In terms of biological role, probably participates in protein translocation into and across both the cytoplasmic and thylakoid membranes in cyanobacterial cells. This chain is Protein translocase subunit SecA, found in Prochlorococcus marinus (strain SARG / CCMP1375 / SS120).